The chain runs to 525 residues: M-phase inducer phosphatase 1 (525 aa).

Residues 73 to 83 (MGSSESTDSGF) carry the Phosphodegron motif. Ser75 carries the post-translational modification Phosphoserine; by CHEK1. Phosphoserine; by NEK11 occurs at positions 78, 81, and 87. Ser106 is modified (phosphoserine). The residue at position 123 (Ser123) is a Phosphoserine; by CHEK1 and CHEK2. Positions 140–142 (KEN) match the KEN box motif. Ser177 carries the post-translational modification Phosphoserine; by CHEK1. Disordered regions lie at residues 179–204 (PARM…PQSP) and 262–308 (SASC…PEKP). Residues Ser279 and Ser293 each carry the phosphoserine; by CHEK1 and CHEK2 modification. Residues 294–306 (VAGASPEEAASPE) show a composition bias toward low complexity. A Phosphoserine modification is found at Ser322. In terms of domain architecture, Rhodanese spans 377–483 (LIKEFVIIDC…FFLKCQSHCE (107 aa)). Residue Cys432 is part of the active site. Thr508 is modified (phosphothreonine; by CHEK1). Residues Ser514 and Ser520 each carry the phosphoserine; by PLK3 modification.

Belongs to the MPI phosphatase family. In terms of assembly, interacts with CCNB1/cyclin B1. Interacts with YWHAE/14-3-3 epsilon when phosphorylated. Interacts with CUL1 specifically when CUL1 is neddylated and active. Interacts with BTRC/BTRCP1 and FBXW11/BTRCP2. Interactions with CUL1, BTRC and FBXW11 are enhanced upon DNA damage. Interacts with HSP90AB1; prevents heat shock-mediated CDC25A degradation and contributes to cell cycle progression. Phosphorylated by CHEK1 on Ser-75, Ser-123, Ser-177, Ser-279, Ser-293 and Thr-508 during checkpoint mediated cell cycle arrest. Also phosphorylated by CHEK2 on Ser-123, Ser-279, and Ser-293 during checkpoint mediated cell cycle arrest. Phosphorylation on Ser-177 and Thr-508 creates binding sites for YWHAE/14-3-3 epsilon which inhibits CDC25A. Phosphorylation on Ser-75, Ser-123, Ser-177, Ser-279 and Ser-293 may also promote ubiquitin-dependent proteolysis of CDC25A by the SCF complex. Phosphorylation of CDC25A at Ser-75 by CHEK1 primes it for subsequent phosphorylation at Ser-78, Ser-81 and Ser-87 by NEK11. Phosphorylation by NEK11 is required for BTRC-mediated polyubiquitination and degradation. Phosphorylation by PIM1 leads to an increase in phosphatase activity. Phosphorylated by PLK3 following DNA damage, leading to promote its ubiquitination and degradation. In terms of processing, ubiquitinated by the anaphase promoting complex/cyclosome (APC/C) ubiquitin ligase complex that contains FZR1/CDH1 during G1 phase leading to its degradation by the proteasome. Ubiquitinated by a SCF complex containing BTRC and FBXW11 during S phase leading to its degradation by the proteasome. Deubiquitination by USP17L2/DUB3 leads to its stabilization.

The enzyme catalyses O-phospho-L-tyrosyl-[protein] + H2O = L-tyrosyl-[protein] + phosphate. With respect to regulation, stimulated by B-type cyclins. Stimulated by PIM1-mediated phosphorylation. In terms of biological role, tyrosine protein phosphatase which functions as a dosage-dependent inducer of mitotic progression. Directly dephosphorylates CDK1 and stimulates its kinase activity. Also dephosphorylates CDK2 in complex with cyclin-E, in vitro. The chain is M-phase inducer phosphatase 1 (CDC25A) from Bos taurus (Bovine).